We begin with the raw amino-acid sequence, 221 residues long: CASP-like protein 4B1 (221 aa).

The interval M1–G78 is disordered. Residues M1 to G87 lie on the Cytoplasmic side of the membrane. Pro residues predominate over residues S19–A33. Low complexity predominate over residues A50–G62. The chain crosses the membrane as a helical span at residues I88–A108. At S109 to R125 the chain is on the extracellular side. The helical transmembrane segment at Y126–F146 threads the bilayer. The Cytoplasmic portion of the chain corresponds to R147–D160. Residues F161 to I181 form a helical membrane-spanning segment. Residues T182–A196 lie on the Extracellular side of the membrane. The chain crosses the membrane as a helical span at residues I197–L217. The Cytoplasmic portion of the chain corresponds to S218 to A221.

Belongs to the Casparian strip membrane proteins (CASP) family. As to quaternary structure, homodimer and heterodimers.

It localises to the cell membrane. The polypeptide is CASP-like protein 4B1 (Hordeum vulgare subsp. vulgare (Domesticated barley)).